Consider the following 293-residue polypeptide: Probable xyloglucan endotransglucosylase/hydrolase protein B (293 aa).

An N-terminal signal peptide occupies residues 1-21 (MASSLLILCLVLVSLASSALC). The region spanning 23–220 (APRRPVDVPF…WSKAPFVAEY (198 aa)) is the GH16 domain. Glutamate 106 (nucleophile) is an active-site residue. The active-site Proton donor is the glutamate 110. Glutamate 110 serves as a coordination point for xyloglucan. Asparagine 114 carries N-linked (GlcNAc...) asparagine glycosylation. Xyloglucan is bound by residues 123 to 125 (QTN), 133 to 135 (DRE), 199 to 200 (DW), and glycine 204. 2 cysteine pairs are disulfide-bonded: cysteine 228/cysteine 237 and cysteine 274/cysteine 287. Residue arginine 279 coordinates xyloglucan.

The protein belongs to the glycosyl hydrolase 16 family. XTH group 1 subfamily. Contains at least one intrachain disulfide bond essential for its enzymatic activity. In terms of tissue distribution, predominantly expressed in the phloem fibers of growing internodes. Weakly or not expressed in the xylem. In the internode, it is expressed closer to the bottom of the internode compared to XTHA.

It is found in the secreted. It localises to the cell wall. The protein resides in the extracellular space. The protein localises to the apoplast. The enzyme catalyses breaks a beta-(1-&gt;4) bond in the backbone of a xyloglucan and transfers the xyloglucanyl segment on to O-4 of the non-reducing terminal glucose residue of an acceptor, which can be a xyloglucan or an oligosaccharide of xyloglucan.. Functionally, catalyzes xyloglucan endohydrolysis (XEH) and/or endotransglycosylation (XET). Cleaves and religates xyloglucan polymers, an essential constituent of the primary cell wall, and thereby participates in cell wall construction of growing tissues. The sequence is that of Probable xyloglucan endotransglucosylase/hydrolase protein B (XTHB) from Phaseolus angularis (Azuki bean).